A 541-amino-acid chain; its full sequence is MKLLMLAFVFLLALATCKGDEFVCEENEPFTCNQTKLFNSGNFEKGFIFGVASSAYQVEGGRGRGLNVWDSFTHRFPEKGGADLGNGDTTCDSYTLWQKDIDVMDELNSTGYRFSIAWSRLLPKGKRSRGVNPGAIKYYNGLIDGLVAKNMTPFVTLFHWDLPQTLQDEYNGFLNKTIVDDFKDYADLCFELFGDRVKNWITINQLYTVPTRGYALGTDAPGRCSPKIDVRCPGGNSSTEPYIVAHNQLLAHAAAVDVYRTKYKDDQKGMIGPVMITRWFLPFDHSQESKDATERAKIFFHGWFMGPLTEGKYPDIMREYVGDRLPEFSETEAALVKGSYDFLGLNYYVTQYAQNNQTIVPSDVHTALMDSRTTLTSKNATGHAPGPPFNAASYYYPKGIYYVMDYFKTTYGDPLIYVTENGFSTPGDEDFEKATADYKRIDYLCSHLCFLSKVIKEKNVNVKGYFAWSLGDNYEFCNGFTVRFGLSYVDFANITGDRDLKASGKWFQKFINVTDEDSTNQDLLRSSVSSKNRDRKSLADA.

The first 19 residues, 1-19 (MKLLMLAFVFLLALATCKG), serve as a signal peptide directing secretion. 3 cysteine pairs are disulfide-bonded: cysteine 24/cysteine 449, cysteine 32/cysteine 445, and cysteine 224/cysteine 232. The N-linked (GlcNAc...) asparagine glycan is linked to asparagine 33. Glutamine 57 is a binding site for a beta-D-glucoside. Asparagine 108 is a glycosylation site (N-linked (GlcNAc...) asparagine). Histidine 159 lines the a beta-D-glucoside pocket. An N-linked (GlcNAc...) asparagine glycan is attached at asparagine 175. Residue 204 to 205 (NQ) participates in a beta-D-glucoside binding. N-linked (GlcNAc...) asparagine glycosylation is present at asparagine 236. Tyrosine 348 lines the a beta-D-glucoside pocket. Residues asparagine 356 and asparagine 379 are each glycosylated (N-linked (GlcNAc...) asparagine). Residues glutamate 420, tryptophan 468, 475–476 (EF), and phenylalanine 484 contribute to the a beta-D-glucoside site. The active-site Nucleophile is the glutamate 420. N-linked (GlcNAc...) asparagine glycosylation is found at asparagine 493 and asparagine 512.

It belongs to the glycosyl hydrolase 1 family. As to quaternary structure, homodimer. As to expression, expressed in guard cells, phloem-associated cells and myrosin cells.

The protein resides in the vacuole. It carries out the reaction a thioglucoside + H2O = a sugar + a thiol.. The enzyme catalyses Hydrolysis of terminal, non-reducing beta-D-glucosyl residues with release of beta-D-glucose.. In terms of biological role, degradation of glucosinolates (glucose residue linked by a thioglucoside bound to an amino acid derivative) to glucose, sulfate and any of the products: thiocyanates, isothiocyanates, nitriles, epithionitriles or oxazolidine-2-thiones. These toxic degradation products can deter insect herbivores. Seems to function in abscisic acid (ABA) and methyl jasmonate (MeJA) signaling in guard cells. Functionally redundant with TGG2. Hydrolyzes sinigrin and, with lower efficiency, p-nitrophenyl beta-D-glucoside. This chain is Myrosinase 1, found in Arabidopsis thaliana (Mouse-ear cress).